The primary structure comprises 242 residues: Uridylate kinase (242 aa).

17–20 (KLGG) provides a ligand contact to ATP. Position 58 (Gly58) interacts with UMP. ATP-binding residues include Gly59 and Arg63. UMP contacts are provided by residues Asp78 and 139-146 (MGMPYFST). Residues Phe172 and Asp175 each contribute to the ATP site.

The protein belongs to the UMP kinase family. As to quaternary structure, homohexamer.

It is found in the cytoplasm. The enzyme catalyses UMP + ATP = UDP + ADP. The protein operates within pyrimidine metabolism; CTP biosynthesis via de novo pathway; UDP from UMP (UMPK route): step 1/1. With respect to regulation, inhibited by UTP. Catalyzes the reversible phosphorylation of UMP to UDP. The protein is Uridylate kinase of Rhodococcus jostii (strain RHA1).